A 424-amino-acid polypeptide reads, in one-letter code: Zinc metalloproteinase-disintegrin-like brevilysin H2a (424 aa).

At Gln1 the chain carries Pyrrolidone carboxylic acid. The Peptidase M12B domain maps to 9 to 207; the sequence is RYVKLAIVAD…YKPQCILNEP (199 aa). A glycan (N-linked (GlcNAc...) asparagine) is linked at Asn69. Position 96 (Asp96) interacts with Ca(2+). 3 disulfide bridges follow: Cys120–Cys202, Cys164–Cys186, and Cys166–Cys169. Zn(2+) is bound at residue His145. Residue Glu146 is part of the active site. Positions 149 and 155 each coordinate Zn(2+). N-linked (GlcNAc...) asparagine glycosylation occurs at Asn185. Positions 202, 205, 217, 220, 222, 224, 227, and 230 each coordinate Ca(2+). Positions 215–301 constitute a Disintegrin domain; it reads PPVCGNELLE…DCPTDDLQRN (87 aa). Intrachain disulfides connect Cys218–Cys247, Cys229–Cys242, Cys231–Cys237, Cys241–Cys264, Cys255–Cys261, Cys260–Cys286, Cys273–Cys293, Cys280–Cys312, Cys305–Cys317, Cys324–Cys374, Cys339–Cys385, Cys352–Cys362, Cys369–Cys411, and Cys405–Cys417. The D/ECD-tripeptide signature appears at 279-281; the sequence is DCD. Asp281, Glu284, and Asp296 together coordinate Ca(2+). N-linked (GlcNAc...) asparagine glycosylation is present at Asn331.

It belongs to the venom metalloproteinase (M12B) family. P-III subfamily. P-IIIa sub-subfamily. As to quaternary structure, monomer. Zn(2+) is required as a cofactor. Post-translationally, glycosylated. In terms of tissue distribution, expressed by the venom gland.

It is found in the secreted. Its proteolytic activity is inhibited by EDTA, TPEN, 1,10-phenanthroline, and some thiol compounds, but is enhanced by alkaline earth metal ions (Mg2+, Ca2+, Sr2+, and Ba2+). Its activity is not modulated by urea (4 M). Its function is as follows. Non-hemorrhagic metalloproteinase that degrades fibrinogen. The alpha chain (FGA) is rapidly degraded, the beta chain (FGB) is degraded very slowly, while the gamma chain is left intact. Shows a prefential cleavage at X-Leu bonds. Cleaves insulin B chain at '29-His-|-Leu-30', '33-Ser-|-His-34', '38-Ala-|-Leu-39' and '40-Tyr-|-Leu-41' bonds. The chain is Zinc metalloproteinase-disintegrin-like brevilysin H2a from Gloydius brevicauda (Korean slamosa snake).